The following is a 296-amino-acid chain: tRNA dimethylallyltransferase (296 aa).

An ATP-binding site is contributed by 10–17 (GPTASGKT). Residue 12–17 (TASGKT) coordinates substrate. Residues 35–38 (DSRQ) are interaction with substrate tRNA.

This sequence belongs to the IPP transferase family. Monomer. Requires Mg(2+) as cofactor.

It carries out the reaction adenosine(37) in tRNA + dimethylallyl diphosphate = N(6)-dimethylallyladenosine(37) in tRNA + diphosphate. Functionally, catalyzes the transfer of a dimethylallyl group onto the adenine at position 37 in tRNAs that read codons beginning with uridine, leading to the formation of N6-(dimethylallyl)adenosine (i(6)A). In Synechococcus sp. (strain RCC307), this protein is tRNA dimethylallyltransferase.